The following is a 406-amino-acid chain: Cysteine desulfurase (406 aa).

At K226 the chain carries N6-(pyridoxal phosphate)lysine. C364 functions as the Cysteine persulfide intermediate in the catalytic mechanism.

Belongs to the class-V pyridoxal-phosphate-dependent aminotransferase family. Csd subfamily. As to quaternary structure, homodimer. Interacts with SufE and the SufBCD complex composed of SufB, SufC and SufD. The interaction with SufE is required to mediate the direct transfer of the sulfur atom from the S-sulfanylcysteine. Pyridoxal 5'-phosphate is required as a cofactor.

It localises to the cytoplasm. The catalysed reaction is (sulfur carrier)-H + L-cysteine = (sulfur carrier)-SH + L-alanine. It carries out the reaction L-selenocysteine + AH2 = hydrogenselenide + L-alanine + A + H(+). It participates in cofactor biosynthesis; iron-sulfur cluster biosynthesis. Its function is as follows. Cysteine desulfurases mobilize the sulfur from L-cysteine to yield L-alanine, an essential step in sulfur metabolism for biosynthesis of a variety of sulfur-containing biomolecules. Component of the suf operon, which is activated and required under specific conditions such as oxidative stress and iron limitation. Acts as a potent selenocysteine lyase in vitro, that mobilizes selenium from L-selenocysteine. Selenocysteine lyase activity is however unsure in vivo. The protein is Cysteine desulfurase of Yersinia pseudotuberculosis serotype O:1b (strain IP 31758).